The sequence spans 445 residues: tRNA modification GTPase MnmE (445 aa).

Residues arginine 20, glutamate 79, and lysine 119 each contribute to the (6S)-5-formyl-5,6,7,8-tetrahydrofolate site. In terms of domain architecture, TrmE-type G spans glycine 215 to glutamate 371. Asparagine 225 lines the K(+) pocket. GTP-binding positions include asparagine 225–serine 230, serine 244–threonine 250, and aspartate 269–glycine 272. Serine 229 contacts Mg(2+). 3 residues coordinate K(+): serine 244, isoleucine 246, and threonine 249. Threonine 250 provides a ligand contact to Mg(2+). Lysine 445 lines the (6S)-5-formyl-5,6,7,8-tetrahydrofolate pocket.

Belongs to the TRAFAC class TrmE-Era-EngA-EngB-Septin-like GTPase superfamily. TrmE GTPase family. As to quaternary structure, homodimer. Heterotetramer of two MnmE and two MnmG subunits. The cofactor is K(+).

The protein localises to the cytoplasm. Exhibits a very high intrinsic GTPase hydrolysis rate. Involved in the addition of a carboxymethylaminomethyl (cmnm) group at the wobble position (U34) of certain tRNAs, forming tRNA-cmnm(5)s(2)U34. The sequence is that of tRNA modification GTPase MnmE from Rickettsia bellii (strain OSU 85-389).